Reading from the N-terminus, the 467-residue chain is Uronate isomerase (467 aa).

This sequence belongs to the metallo-dependent hydrolases superfamily. Uronate isomerase family.

It catalyses the reaction D-glucuronate = D-fructuronate. The catalysed reaction is aldehydo-D-galacturonate = keto-D-tagaturonate. The protein operates within carbohydrate metabolism; pentose and glucuronate interconversion. The chain is Uronate isomerase from Flavobacterium johnsoniae (strain ATCC 17061 / DSM 2064 / JCM 8514 / BCRC 14874 / CCUG 350202 / NBRC 14942 / NCIMB 11054 / UW101) (Cytophaga johnsonae).